Reading from the N-terminus, the 594-residue chain is Spindle pole body-associated protein CIK1 (594 aa).

The tract at residues 1 to 29 (MNNSKIPKLSFHSDPNNVTRDFPKTKRQK) is disordered. Positions 81–360 (IERVKNNERK…VNELEKVQQE (280 aa)) form a coiled coil.

As to quaternary structure, interacts with KAR3; the interaction is direct.

The protein localises to the nucleus. The protein resides in the cytoplasm. It localises to the cytoskeleton. It is found in the microtubule organizing center. Its subcellular location is the spindle pole body. The protein localises to the spindle. Functionally, together with the minus end-directed microtubule motor KAR3, involved in spindle midzone assembly, karyogamy (nuclear fusion) during mating, and with an essential function in meiosis I. To contribute to spindle midzone assembly during mitotic metaphase, the KAR3-CIK1 motor cross-links anti-parallel microtubules to align them on the spindle axis; as the motor travels polewards splayed microtubules are pulled into alignment. During the karyogamy (nuclear fusion) step of mating, KAR3-CIK1 cross-links antiparallel cytoplasmic microtubules emanating from the spindle pole bodies of mating partners; the motor activity of KAR3 creates the force that pulls the nuclei together by sliding cross-linked microtubules past one another. KAR3-CIK1 promotes microtubule shortening predominantly from the microtubule plus-end. Required for interhomolog recombination, synapsis of homologous chromosomes and establishment of a meiosis I spindle. The chain is Spindle pole body-associated protein CIK1 (CIK1) from Saccharomyces cerevisiae (strain ATCC 204508 / S288c) (Baker's yeast).